Here is a 362-residue protein sequence, read N- to C-terminus: Chorismate synthase (362 aa).

Residue Arg-47 participates in NADP(+) binding. Residues 124–126, Gly-286, 301–305, and Arg-327 contribute to the FMN site; these read RSS and KPTAT.

This sequence belongs to the chorismate synthase family. In terms of assembly, homotetramer. The cofactor is FMNH2.

The catalysed reaction is 5-O-(1-carboxyvinyl)-3-phosphoshikimate = chorismate + phosphate. It functions in the pathway metabolic intermediate biosynthesis; chorismate biosynthesis; chorismate from D-erythrose 4-phosphate and phosphoenolpyruvate: step 7/7. Its function is as follows. Catalyzes the anti-1,4-elimination of the C-3 phosphate and the C-6 proR hydrogen from 5-enolpyruvylshikimate-3-phosphate (EPSP) to yield chorismate, which is the branch point compound that serves as the starting substrate for the three terminal pathways of aromatic amino acid biosynthesis. This reaction introduces a second double bond into the aromatic ring system. This chain is Chorismate synthase, found in Synechococcus elongatus (strain ATCC 33912 / PCC 7942 / FACHB-805) (Anacystis nidulans R2).